Consider the following 227-residue polypeptide: 2,3-bisphosphoglycerate-dependent phosphoglycerate mutase (227 aa).

Residues Arg7 to Asn14, Thr20 to Gly21, Arg59, Glu86 to Tyr89, Lys97, Arg113 to Arg114, and Gly182 to Asn183 each bind substrate. The Tele-phosphohistidine intermediate role is filled by His8. Glu86 functions as the Proton donor/acceptor in the catalytic mechanism.

It belongs to the phosphoglycerate mutase family. BPG-dependent PGAM subfamily. Homodimer.

The catalysed reaction is (2R)-2-phosphoglycerate = (2R)-3-phosphoglycerate. It participates in carbohydrate degradation; glycolysis; pyruvate from D-glyceraldehyde 3-phosphate: step 3/5. Catalyzes the interconversion of 2-phosphoglycerate and 3-phosphoglycerate. The protein is 2,3-bisphosphoglycerate-dependent phosphoglycerate mutase of Neisseria meningitidis serogroup C (strain 053442).